Reading from the N-terminus, the 214-residue chain is Superoxide dismutase [Mn] (214 aa).

Mn(2+) is bound by residues H27, H82, D169, and H173.

The protein belongs to the iron/manganese superoxide dismutase family. Homodimer. Mn(2+) serves as cofactor.

It catalyses the reaction 2 superoxide + 2 H(+) = H2O2 + O2. Its function is as follows. Destroys superoxide anion radicals which are normally produced within the cells and which are toxic to biological systems. The protein is Superoxide dismutase [Mn] (sodA) of Pasteurella multocida (strain Pm70).